The sequence spans 283 residues: Shikimate dehydrogenase (NADP(+)) (283 aa).

Shikimate-binding positions include 22 to 24 and T69; that span reads SRS. K73 (proton acceptor) is an active-site residue. Shikimate contacts are provided by N93 and D108. NADP(+) contacts are provided by residues 133–137 and L222; that span reads GAGGS. Y224 provides a ligand contact to shikimate. Residue G245 coordinates NADP(+).

The protein belongs to the shikimate dehydrogenase family. As to quaternary structure, homodimer.

The catalysed reaction is shikimate + NADP(+) = 3-dehydroshikimate + NADPH + H(+). It functions in the pathway metabolic intermediate biosynthesis; chorismate biosynthesis; chorismate from D-erythrose 4-phosphate and phosphoenolpyruvate: step 4/7. Functionally, involved in the biosynthesis of the chorismate, which leads to the biosynthesis of aromatic amino acids. Catalyzes the reversible NADPH linked reduction of 3-dehydroshikimate (DHSA) to yield shikimate (SA). The polypeptide is Shikimate dehydrogenase (NADP(+)) (Rhodopseudomonas palustris (strain BisB5)).